The following is a 295-amino-acid chain: ATP synthase gamma chain (295 aa).

The protein belongs to the ATPase gamma chain family. As to quaternary structure, F-type ATPases have 2 components, CF(1) - the catalytic core - and CF(0) - the membrane proton channel. CF(1) has five subunits: alpha(3), beta(3), gamma(1), delta(1), epsilon(1). CF(0) has three main subunits: a, b and c.

Its subcellular location is the cell inner membrane. Functionally, produces ATP from ADP in the presence of a proton gradient across the membrane. The gamma chain is believed to be important in regulating ATPase activity and the flow of protons through the CF(0) complex. The sequence is that of ATP synthase gamma chain from Sulfurimonas denitrificans (strain ATCC 33889 / DSM 1251) (Thiomicrospira denitrificans (strain ATCC 33889 / DSM 1251)).